The sequence spans 412 residues: FAD-dependent monooxygenase nscC (412 aa).

Residues 1–21 (MGKQQETILIIGAGIAGLTTS) form the signal peptide. Positions 35 and 46 each coordinate FAD. Residue N92 is glycosylated (N-linked (GlcNAc...) asparagine). Residue R119 participates in FAD binding. N-linked (GlcNAc...) asparagine glycosylation is found at N170 and N231. FAD is bound by residues D326 and G339.

This sequence belongs to the paxM FAD-dependent monooxygenase family. It depends on FAD as a cofactor.

It functions in the pathway secondary metabolite biosynthesis. Functionally, FAD-dependent monooxygenase; part of the gene cluster that mediates the biosynthesis of neosartoricin B, a prenylated anthracenone that probably exhibits T-cell antiproliferative activity, suggestive of a physiological role as an immunosuppressive agent. The non-reducing polyketide synthase nscA probably synthesizes and cyclizes the decaketide backbone. The hydrolase nscB then mediates the product release through hydrolysis followed by spontaneous decarboxylation. The prenyltransferase nscD catalyzes the addition of the dimethylallyl group to the aromatic C5. The FAD-dependent monooxygenase nscC is then responsible for the stereospecific hydroxylation at C2. Neosartoricin B can be converted into two additional compounds neosartoricins C and D. Neosartoricin C is a spirocyclic compound that is cyclized through the attack of C3 hydroxyl on C14, followed by dehydration. On the other hand, neosartoricin D is a further cyclized compound in which attack of C2 on C14 in neosartoricin C results in the formation of the acetal-containing dioxabicyclo-octanone ring. Both of these compounds are novel and possibly represent related metabolites of the gene cluster. This is FAD-dependent monooxygenase nscC from Arthroderma benhamiae (strain ATCC MYA-4681 / CBS 112371) (Trichophyton mentagrophytes).